The sequence spans 395 residues: Choline/ethanolamine kinase (395 aa).

Position 2 is an N-acetylalanine (alanine 2). ATP is bound by residues 75-81 (SGGLSNL), arginine 104, 146-152 (QYIPSRP), glutamine 244, and aspartate 264. 77–79 (GLS) is a binding site for phosphocholine.

The protein belongs to the choline/ethanolamine kinase family. In terms of assembly, homodimer, and heterodimer with CHKA.

It catalyses the reaction choline + ATP = phosphocholine + ADP + H(+). The catalysed reaction is ethanolamine + ATP = phosphoethanolamine + ADP + H(+). Its pathway is phospholipid metabolism; phosphatidylethanolamine biosynthesis; phosphatidylethanolamine from ethanolamine: step 1/3. Has a key role in phospholipid metabolism, and catalyzes the first step of phosphatidylethanolamine and phosphatidylcholine biosynthesis. This Homo sapiens (Human) protein is Choline/ethanolamine kinase (CHKB).